We begin with the raw amino-acid sequence, 65 residues long: Large ribosomal subunit protein uL30 (65 aa).

Belongs to the universal ribosomal protein uL30 family. As to quaternary structure, part of the 50S ribosomal subunit.

The chain is Large ribosomal subunit protein uL30 from Rickettsia bellii (strain OSU 85-389).